The chain runs to 49 residues: Single-stranded DNA-binding protein (49 aa).

Homodimer in the absence of DNA, monomer when binding DNA.

Functionally, binds preferentially to single-stranded DNA and therefore, destabilizes double-stranded DNA. It is involved in DNA replication, repair and recombination. Binds ss-DNA as the replication fork advances and stimulates the replisome processivity and accuracy. In Enterobacteria phage RB9 (Bacteriophage RB9), this protein is Single-stranded DNA-binding protein (32).